Here is a 320-residue protein sequence, read N- to C-terminus: Polyadenylate-binding protein-interacting protein 13 (320 aa).

Residues 1–44 (MAVAENVGVKVDSSNNQNIDNNTTSLVETKPSCSDDQTPKSKSS) are disordered. Residues 12–44 (DSSNNQNIDNNTTSLVETKPSCSDDQTPKSKSS) show a composition bias toward polar residues. The PAM2-like signature appears at 65–75 (HLNPMAKEFVP). RRM domains follow at residues 137 to 212 (RTVY…MSKT) and 234 to 310 (KTVY…PSKT).

This chain is Polyadenylate-binding protein-interacting protein 13 (CID13), found in Arabidopsis thaliana (Mouse-ear cress).